A 517-amino-acid chain; its full sequence is Cytochrome P450 monooxygenase polD (517 aa).

Residues 5 to 27 (VVLVGIVVLVLAYLSSTGKVYPH) form a helical membrane-spanning segment. Position 435 (cysteine 435) interacts with heme.

This sequence belongs to the cytochrome P450 family. It depends on heme as a cofactor.

The protein resides in the membrane. Cytochrome P450 monooxygenase; part of the gene cluster that mediates the biosynthesis of antifungal fernane-type triterpenoid polytolypin. PolD doe not seem to be involved in the biosynthesis of polytolypin. Within the pathway, the triterpene cyclase polA first catalyzes the cyclization of 2,3-oxidosqualene to motiol, polc converts the 4-alpha-methyl group of motiol to a carboxyl group, polB is responsible for appending a hydroxyl group at the 2-alpha position and polE is a dual functional P450, which can catalyze the formation of both the 1-beta-hydroxyl group and 10-beta-carboxyl group. The polypeptide is Cytochrome P450 monooxygenase polD (Polytolypa hystricis (strain UAMH7299)).